The sequence spans 468 residues: Replication factor C large subunit (468 aa).

ATP is bound at residue 50 to 57 (GPPGSGKT). Residues 422–456 (EEKAVEEKVEEEEAEEEEEEERKEEEKPKAEKKKG) are disordered. The segment covering 429–444 (KVEEEEAEEEEEEERK) has biased composition (acidic residues).

The protein belongs to the activator 1 small subunits family. RfcL subfamily. In terms of assembly, heteromultimer composed of small subunits (RfcS) and large subunits (RfcL).

Its function is as follows. Part of the RFC clamp loader complex which loads the PCNA sliding clamp onto DNA. The sequence is that of Replication factor C large subunit from Pyrococcus horikoshii (strain ATCC 700860 / DSM 12428 / JCM 9974 / NBRC 100139 / OT-3).